We begin with the raw amino-acid sequence, 92 residues long: Small ribosomal subunit protein uS19 (92 aa).

This sequence belongs to the universal ribosomal protein uS19 family.

In terms of biological role, protein S19 forms a complex with S13 that binds strongly to the 16S ribosomal RNA. This chain is Small ribosomal subunit protein uS19, found in Rhodopseudomonas palustris (strain BisB5).